Consider the following 205-residue polypeptide: ATP phosphoribosyltransferase (205 aa).

It belongs to the ATP phosphoribosyltransferase family. Short subfamily. In terms of assembly, heteromultimer composed of HisG and HisZ subunits.

The protein localises to the cytoplasm. The catalysed reaction is 1-(5-phospho-beta-D-ribosyl)-ATP + diphosphate = 5-phospho-alpha-D-ribose 1-diphosphate + ATP. Its pathway is amino-acid biosynthesis; L-histidine biosynthesis; L-histidine from 5-phospho-alpha-D-ribose 1-diphosphate: step 1/9. Catalyzes the condensation of ATP and 5-phosphoribose 1-diphosphate to form N'-(5'-phosphoribosyl)-ATP (PR-ATP). Has a crucial role in the pathway because the rate of histidine biosynthesis seems to be controlled primarily by regulation of HisG enzymatic activity. The chain is ATP phosphoribosyltransferase from Helicobacter hepaticus (strain ATCC 51449 / 3B1).